The primary structure comprises 691 residues: T-box transcription factor TBX2-B (691 aa).

Residues 104-277 constitute a DNA-binding region (T-box); the sequence is LWDQFHKIGT…HNPFAKGFRD (174 aa). Disordered regions lie at residues 301 to 440 and 612 to 691; these read CKAD…SLSK and NLLT…ESPK. Low complexity predominate over residues 325–335; sequence HSPLSAAPSPL. 3 stretches are compositionally biased toward basic and acidic residues: residues 340–361, 378–402, and 415–433; these read TNREEKFGADSDQELDRREVRS, RLEDRGKDKSTPEKKSDSPESRKDG, and SLEKDKVESRRKEDSKSDP. Over residues 624 to 639 the composition is skewed to low complexity; it reads PGSESSKPGSSRESSP. A coiled-coil region spans residues 659–684; that stretch reads SMKDSINELQRIQRLVSGLERQREVS. The span at 678-691 shows a compositional bias: basic and acidic residues; that stretch reads ERQREVSPGRESPK.

In terms of assembly, binds DNA as a monomer.

Its subcellular location is the nucleus. Transcription factor which acts as a transcriptional repressor. May also function as a transcriptional activator. Binds to the palindromic T site 5'-TTCACACCTAGGTGTGAA-3' DNA sequence, or a half-site, which are present in the regulatory region of several genes. The sequence is that of T-box transcription factor TBX2-B (tbx2-b) from Xenopus laevis (African clawed frog).